Reading from the N-terminus, the 131-residue chain is Protein FAM107B (131 aa).

At alanine 2 the chain carries N-acetylalanine. The tract at residues 39 to 79 (MNQKRGLAPQNKPELQKVMEKRRRDQVIKQKEEEAQKKKSD) is disordered. Position 50 is an N6-acetyllysine (lysine 50). Residues 52–79 (ELQKVMEKRRRDQVIKQKEEEAQKKKSD) are compositionally biased toward basic and acidic residues. The stretch at 61–112 (RRDQVIKQKEEEAQKKKSDLEIELLKRQQKLEQLELEKQKLQEEQENAPEFV) forms a coiled coil.

The protein belongs to the FAM107 family. Expressed in the hippocampus and hypothalamus. Expressed in the pontine nuclei and reticulotegmental nucleus. Expressed in Purkinje cell and nuclear layers of the cerebelum. Expressed in the choroid plexus. Expressed in hippocampal granule neurons of the dente gyrus.

This chain is Protein FAM107B, found in Mus musculus (Mouse).